Reading from the N-terminus, the 129-residue chain is DNA-directed RNA polymerase subunit omega (129 aa).

The disordered stretch occupies residues 76-100 (EVDEPEPEAVPMIASGDSSGGEDSD).

The protein belongs to the RNA polymerase subunit omega family. In terms of assembly, the RNAP catalytic core consists of 2 alpha, 1 beta, 1 beta' and 1 omega subunit. When a sigma factor is associated with the core the holoenzyme is formed, which can initiate transcription.

It carries out the reaction RNA(n) + a ribonucleoside 5'-triphosphate = RNA(n+1) + diphosphate. Its function is as follows. Promotes RNA polymerase assembly. Latches the N- and C-terminal regions of the beta' subunit thereby facilitating its interaction with the beta and alpha subunits. The protein is DNA-directed RNA polymerase subunit omega of Xanthobacter autotrophicus (strain ATCC BAA-1158 / Py2).